Here is a 137-residue protein sequence, read N- to C-terminus: uncharacterized protein (137 aa).

The protein belongs to the ycf72 family.

It is found in the plastid. The protein localises to the chloroplast. This is an uncharacterized protein from Saccharum hybrid (Sugarcane).